The following is a 347-amino-acid chain: N-acetyl-gamma-glutamyl-phosphate reductase (347 aa).

Cysteine 151 is an active-site residue.

It belongs to the NAGSA dehydrogenase family. Type 1 subfamily.

It is found in the cytoplasm. The catalysed reaction is N-acetyl-L-glutamate 5-semialdehyde + phosphate + NADP(+) = N-acetyl-L-glutamyl 5-phosphate + NADPH + H(+). It participates in amino-acid biosynthesis; L-arginine biosynthesis; N(2)-acetyl-L-ornithine from L-glutamate: step 3/4. In terms of biological role, catalyzes the NADPH-dependent reduction of N-acetyl-5-glutamyl phosphate to yield N-acetyl-L-glutamate 5-semialdehyde. This Pelotomaculum thermopropionicum (strain DSM 13744 / JCM 10971 / SI) protein is N-acetyl-gamma-glutamyl-phosphate reductase.